Here is a 226-residue protein sequence, read N- to C-terminus: Cytidylate kinase (226 aa).

Residue 10-18 (GPASSGKST) participates in ATP binding.

Belongs to the cytidylate kinase family. Type 1 subfamily.

It is found in the cytoplasm. It carries out the reaction CMP + ATP = CDP + ADP. The catalysed reaction is dCMP + ATP = dCDP + ADP. The sequence is that of Cytidylate kinase from Enterococcus faecalis (strain ATCC 700802 / V583).